The sequence spans 211 residues: C-type lectin domain family 2 member L (211 aa).

The tract at residues Met1 to Thr53 is disordered. Residues Arg10–Arg28 show a composition bias toward pro residues. Position 29 is a phosphoserine (Ser29). Residues Leu66–Ala86 traverse the membrane as a helical segment. The region spanning Tyr104–Ser206 is the C-type lectin domain. Intrachain disulfides connect Cys125–Cys205 and Cys184–Cys197.

It is found in the membrane. In Mus musculus (Mouse), this protein is C-type lectin domain family 2 member L (Clec2l).